The following is a 113-amino-acid chain: Dolichyl-diphosphooligosaccharide--protein glycosyltransferase subunit dad-1 (113 aa).

Over 1–32 (MAAQVVPVLSKLFDDYQKTTSSKLKIIDAYMT) the chain is Cytoplasmic. Residues 33–53 (YILFTGIFQFIYCLLVGTFPF) traverse the membrane as a helical segment. The Lumenal portion of the chain corresponds to 54 to 55 (NS). Residues 56-78 (FLSGFISTVTSFVLASCLRMQVN) traverse the membrane as a helical segment. The Cytoplasmic portion of the chain corresponds to 79–92 (QENRSEFTAVSTER). The chain crosses the membrane as a helical span at residues 93-113 (AFADFIFANLILHLVVVNFLG).

This sequence belongs to the DAD/OST2 family. In terms of assembly, component of the oligosaccharyltransferase (OST) complex.

It localises to the endoplasmic reticulum membrane. The protein operates within protein modification; protein glycosylation. Subunit of the oligosaccharyl transferase (OST) complex that catalyzes the initial transfer of a defined glycan (Glc(3)Man(9)GlcNAc(2) in eukaryotes) from the lipid carrier dolichol-pyrophosphate to an asparagine residue within an Asn-X-Ser/Thr consensus motif in nascent polypeptide chains, the first step in protein N-glycosylation. N-glycosylation occurs cotranslationally and the complex associates with the Sec61 complex at the channel-forming translocon complex that mediates protein translocation across the endoplasmic reticulum (ER). All subunits are required for a maximal enzyme activity. Possesses cell death-inhibiting activity. Suppresses some programmed cell death in C.elegans. The chain is Dolichyl-diphosphooligosaccharide--protein glycosyltransferase subunit dad-1 from Caenorhabditis elegans.